Consider the following 171-residue polypeptide: Neuronal vesicle trafficking-associated protein 2 (171 aa).

The segment at 1–21 is disordered; sequence MVKLNSNPSEKGAKPPSVEDG. Over 1-71 the chain is Cytoplasmic; it reads MVKLNSNPSE…FRVPKIAEFT (71 aa). A helical; Signal-anchor for type II membrane protein membrane pass occupies residues 72–92; it reads VTILVSLALAFLACIVFLVVY. Over 93–171 the chain is Lumenal; sequence KAFTYDHSCP…EPKPPKTQGH (79 aa).

This sequence belongs to the NSG family.

Its subcellular location is the membrane. The protein resides in the golgi apparatus. It is found in the trans-Golgi network membrane. The protein localises to the cell projection. It localises to the dendrite. Its subcellular location is the endosome membrane. The protein resides in the early endosome membrane. It is found in the late endosome membrane. The protein localises to the lysosome lumen. It localises to the cytoplasmic vesicle membrane. Its subcellular location is the golgi stack membrane. The protein resides in the endosome. It is found in the multivesicular body membrane. The polypeptide is Neuronal vesicle trafficking-associated protein 2 (Bos taurus (Bovine)).